A 228-amino-acid chain; its full sequence is Ephrin-A5b (228 aa).

The first 20 residues, 1-20 (MLQAEMIVFVGVILWMCVFS), serve as a signal peptide directing secretion. The Ephrin RBD domain occupies 29-162 (ADRYAVFWNR…KLKVFVRPPN (134 aa)). An N-linked (GlcNAc...) asparagine glycan is attached at Asn-37. Disulfide bonds link Cys-62/Cys-102 and Cys-90/Cys-151. Over residues 184–198 (LEPRDDTSHEAEPSR) the composition is skewed to basic and acidic residues. Positions 184–205 (LEPRDDTSHEAEPSRSDVSTSG) are disordered. Ser-204 carries GPI-anchor amidated serine lipidation. The propeptide at 205–228 (GLRHQTSRPLLALLLLCISLYLLL) is removed in mature form.

This sequence belongs to the ephrin family. As to expression, widespread expression in the embryo.

The protein localises to the cell membrane. In terms of biological role, cell surface GPI-bound ligand for Eph receptors, a family of receptor tyrosine kinases which are crucial for migration, repulsion and adhesion during neuronal, vascular and epithelial development. Binds promiscuously Eph receptors residing on adjacent cells, leading to contact-dependent bidirectional signaling into neighboring cells. Induces compartmentalized signaling within a caveolae-like membrane microdomain when bound to the extracellular domain of its cognate receptor. This signaling event requires the activity of the Fyn tyrosine kinase. Activates the epha3 receptor to regulate cell-cell adhesion and cytoskeletal organization. With the receptor epha2 may regulate lens fiber cells shape and interactions and be important for lens transparency maintenance. May function actively to stimulate axon fasciculation. Controls axon growth and may be involved in the creation of the retino-tectal map. This is Ephrin-A5b (efna5b) from Danio rerio (Zebrafish).